A 446-amino-acid polypeptide reads, in one-letter code: Calcium-binding and coiled-coil domain-containing protein 2 (446 aa).

Positions 133–136 (ILVV) match the CLIR motif. Residues 137–349 (TTQGEVEEIE…RENSRLLSYM (213 aa)) adopt a coiled-coil conformation. The short motif at 203 to 206 (DYWE) is the LIR-like element. The tract at residues 362–390 (TSDEGGARQNPGLAYGNPYSGIQESSSPS) is disordered. Residues 371–381 (NPGLAYGNPYS) are interaction with LGALS8. The segment covering 381–390 (SGIQESSSPS) has biased composition (polar residues). The tract at residues 395–446 (KKCPICKADDICDHTLEQQQMQPLCFNCPICDKIFPATEKQIFEDHVFCHSL) is interaction with MYO6. The UBZ1-type zinc finger occupies 419–444 (CFNCPICDKIFPATEKQIFEDHVFCH). 4 residues coordinate Zn(2+): C422, C425, H440, and H444. S445 is subject to Phosphoserine.

This sequence belongs to the CALCOCO family. Dimer. Part of a complex consisting of CALCOCO2, TAX1BP1 and MYO6. Interacts with MYO6. Interacts with GEMIN4. Interacts with ATG8 family members MAP1LC3A, MAP1LC3B, GABARAP, GABARAPL1 and GABARAPL2. Interacts with ATG8 family member MAP1LC3C. Interacts with LGALS8. Interacts with TOM1; the interaction is indirect and is mediated by MYO6, which acts as a bridge between TOM1 and CALCOCO2. Interacts with AZI2. In terms of assembly, (Microbial infection) Interacts with Lassa virus protein Z. As to quaternary structure, (Microbial infection) Interacts with Mopeia virus protein Z. In terms of processing, (Microbial infection) Cleaved by S.pyogenes SpeB protease; leading to its degradation. Degradation by SpeB prevents autophagy, promoting to S.pyogenes intracellular replication. As to expression, expressed in all tissues tested with highest expression in skeletal muscle and lowest in brain.

It localises to the cytoplasm. The protein resides in the perinuclear region. The protein localises to the cytoskeleton. Its subcellular location is the cytoplasmic vesicle. It is found in the autophagosome membrane. Its function is as follows. Xenophagy-specific receptor required for autophagy-mediated intracellular bacteria degradation. Acts as an effector protein of galectin-sensed membrane damage that restricts the proliferation of infecting pathogens such as Salmonella typhimurium upon entry into the cytosol by targeting LGALS8-associated bacteria for autophagy. Initially orchestrates bacteria targeting to autophagosomes and subsequently ensures pathogen degradation by regulating pathogen-containing autophagosome maturation. Bacteria targeting to autophagosomes relies on its interaction with MAP1LC3A, MAP1LC3B and/or GABARAPL2, whereas regulation of pathogen-containing autophagosome maturation requires the interaction with MAP3LC3C. May play a role in ruffle formation and actin cytoskeleton organization and seems to negatively regulate constitutive secretion. The sequence is that of Calcium-binding and coiled-coil domain-containing protein 2 (CALCOCO2) from Homo sapiens (Human).